We begin with the raw amino-acid sequence, 503 residues long: Dentin matrix acidic phosphoprotein 1 (503 aa).

The first 16 residues, 1–16 (MKTVILLVFLWGLSCA), serve as a signal peptide directing secretion. Positions 23-35 (HNTESESSEERTG) are enriched in basic and acidic residues. The segment at 23 to 503 (HNTESESSEE…QDDNDCQDGY (481 aa)) is disordered. The span at 54–63 (QASPEGQANS) shows a compositional bias: polar residues. Positions 98–119 (KEDDEDDSGDDTFGDEDNDLGP) are enriched in acidic residues. The segment covering 138–150 (DTTQSSEDSTSQE) has biased composition (low complexity). Basic and acidic residues predominate over residues 158-175 (SDSKDHDSEDEADSRPEA). The segment covering 203–215 (SEFDDEGMQSDDP) has biased composition (acidic residues). Basic and acidic residues-rich tracts occupy residues 233–243 (RSEESKGDHEP), 267–286 (HVSEEDYRGELTDSNSRETQ), and 293–303 (TASKEESRSES). The span at 332-348 (EPSQESSSESQEGVTSE) shows a compositional bias: low complexity. The short motif at 350–352 (RGD) is the Cell attachment site element. N-linked (GlcNAc...) asparagine glycosylation is present at Asn356. A compositionally biased stretch (acidic residues) spans 362 to 373 (DQEDSESSEEDS). Asn394 carries N-linked (GlcNAc...) asparagine glycosylation. Residues 407–418 (AQDGDSSSQEGL) show a composition bias toward polar residues. Positions 419–435 (QSQSASTESRSQESQSE) are enriched in low complexity. Asn457 carries an N-linked (GlcNAc...) asparagine glycan. The span at 467–492 (EDIRPKNMEADSRKLIVDAYHNKPIG) shows a compositional bias: basic and acidic residues. The segment covering 493-503 (DQDDNDCQDGY) has biased composition (acidic residues).

As to quaternary structure, interacts with importin alpha. In terms of processing, phosphorylated in the cytosol and extracellular matrix and unphosphorylated in the nucleus. Phosphorylation is necessary for nucleocytoplasmic transport and may be catalyzed by a nuclear isoform of CK2 and can be augmented by calcium. Phosphorylated (in vitro) by FAM20C in the extracellular medium at sites within the S-x-E/pS motif. In terms of tissue distribution, expressed in tooth particularly in odontoblast, ameloblast and cementoblast. Also expressed in bone particularly in osteoblast.

It localises to the nucleus. It is found in the cytoplasm. The protein localises to the secreted. Its subcellular location is the extracellular space. The protein resides in the extracellular matrix. In terms of biological role, may have a dual function during osteoblast differentiation. In the nucleus of undifferentiated osteoblasts, unphosphorylated form acts as a transcriptional component for activation of osteoblast-specific genes like osteocalcin. During the osteoblast to osteocyte transition phase it is phosphorylated and exported into the extracellular matrix, where it regulates nucleation of hydroxyapatite. This Mus musculus (Mouse) protein is Dentin matrix acidic phosphoprotein 1.